We begin with the raw amino-acid sequence, 363 residues long: UDP-N-acetylglucosamine--N-acetylmuramyl-(pentapeptide) pyrophosphoryl-undecaprenol N-acetylglucosamine transferase (363 aa).

Residues 12–14 (TAG), Arg166, Ser196, and Gln291 each bind UDP-N-acetyl-alpha-D-glucosamine.

It belongs to the glycosyltransferase 28 family. MurG subfamily.

The protein localises to the cell inner membrane. It catalyses the reaction di-trans,octa-cis-undecaprenyl diphospho-N-acetyl-alpha-D-muramoyl-L-alanyl-D-glutamyl-meso-2,6-diaminopimeloyl-D-alanyl-D-alanine + UDP-N-acetyl-alpha-D-glucosamine = di-trans,octa-cis-undecaprenyl diphospho-[N-acetyl-alpha-D-glucosaminyl-(1-&gt;4)]-N-acetyl-alpha-D-muramoyl-L-alanyl-D-glutamyl-meso-2,6-diaminopimeloyl-D-alanyl-D-alanine + UDP + H(+). It participates in cell wall biogenesis; peptidoglycan biosynthesis. Its function is as follows. Cell wall formation. Catalyzes the transfer of a GlcNAc subunit on undecaprenyl-pyrophosphoryl-MurNAc-pentapeptide (lipid intermediate I) to form undecaprenyl-pyrophosphoryl-MurNAc-(pentapeptide)GlcNAc (lipid intermediate II). This chain is UDP-N-acetylglucosamine--N-acetylmuramyl-(pentapeptide) pyrophosphoryl-undecaprenol N-acetylglucosamine transferase, found in Legionella pneumophila (strain Paris).